The following is a 401-amino-acid chain: Adenylosuccinate synthetase (401 aa).

Residues 12-18 (GDEGKGK) and 40-42 (GHT) each bind GTP. Catalysis depends on Asp13, which acts as the Proton acceptor. Asp13 and Gly40 together coordinate Mg(2+). IMP-binding positions include 13-16 (DEGK), 38-41 (NAGH), Thr128, Arg142, Gln212, Thr227, and Arg290. His41 serves as the catalytic Proton donor. Residue 286-292 (ATTRRPR) participates in substrate binding. Residues Arg292, 318–320 (KAD), and 390–392 (STG) each bind GTP.

This sequence belongs to the adenylosuccinate synthetase family. In terms of assembly, homodimer. Mg(2+) serves as cofactor.

It is found in the cytoplasm. It carries out the reaction IMP + L-aspartate + GTP = N(6)-(1,2-dicarboxyethyl)-AMP + GDP + phosphate + 2 H(+). It participates in purine metabolism; AMP biosynthesis via de novo pathway; AMP from IMP: step 1/2. In terms of biological role, plays an important role in the de novo pathway of purine nucleotide biosynthesis. Catalyzes the first committed step in the biosynthesis of AMP from IMP. This chain is Adenylosuccinate synthetase, found in Pseudothermotoga lettingae (strain ATCC BAA-301 / DSM 14385 / NBRC 107922 / TMO) (Thermotoga lettingae).